Consider the following 227-residue polypeptide: Phosphoglycolate phosphatase (227 aa).

Catalysis depends on D8, which acts as the Nucleophile. Mg(2+)-binding residues include D8 and D10. Substrate is bound at residue K152. Mg(2+) is bound by residues D175 and D179.

This sequence belongs to the archaeal SPP-like hydrolase family. It depends on Mg(2+) as a cofactor.

The enzyme catalyses 2-phosphoglycolate + H2O = glycolate + phosphate. In terms of biological role, catalyzes the dephosphorylation of 2-phosphoglycolate. This Halorubrum lacusprofundi (strain ATCC 49239 / DSM 5036 / JCM 8891 / ACAM 34) protein is Phosphoglycolate phosphatase.